The following is a 53-amino-acid chain: uncharacterized protein (53 aa).

Residues 1 to 19 (MKLLTILILFYSFFMNLQA) form the signal peptide.

This is an uncharacterized protein from Autographa californica nuclear polyhedrosis virus (AcMNPV).